The primary structure comprises 735 residues: DNA replication licensing factor mcm5 (735 aa).

An MCM domain is found at 332–538; that stretch reads IYETVAKSIA…RDMTLAKHVM (207 aa). Position 372 (Arg-372) interacts with ADP. The Arginine finger signature appears at 513–516; sequence SRFD.

Belongs to the MCM family. Component of the mcm2-7 complex (RLF-M). The complex forms a toroidal hexameric ring with the proposed subunit order mcm2-mcm6-mcm4-mcm7-mcm3-mcm5. The heterodimer of mmcm3/mcm5 interacts with mcm4, mmcm6, mcm7 and weakly with mcm2. Component of the CMG helicase complex, composed of the mcm2-7 complex, the GINS complex and cdc45.

It is found in the nucleus. The protein localises to the chromosome. The catalysed reaction is ATP + H2O = ADP + phosphate + H(+). Acts as a component of the MCM2-7 complex (MCM complex) which is the replicative helicase essential for 'once per cell cycle' DNA replication initiation and elongation in eukaryotic cells. Core component of CDC45-MCM-GINS (CMG) helicase, the molecular machine that unwinds template DNA during replication, and around which the replisome is built. The active ATPase sites in the MCM2-7 ring are formed through the interaction surfaces of two neighboring subunits such that a critical structure of a conserved arginine finger motif is provided in trans relative to the ATP-binding site of the Walker A box of the adjacent subunit. The six ATPase active sites, however, are likely to contribute differentially to the complex helicase activity. This is DNA replication licensing factor mcm5 from Xenopus tropicalis (Western clawed frog).